The primary structure comprises 62 residues: Flavodoxin (62 aa).

The region spanning 4 to 62 is the Flavodoxin-like domain; sequence IGIFFGTDTGKTRKIAKMIHKQLGELADAPVNINRTTLDDFMAYPVLLLGTPTLGDGQL.

It belongs to the flavodoxin family. FMN serves as cofactor.

Functionally, low-potential electron donor to a number of redox enzymes. NifF is the electron donor to nitrogenase. The chain is Flavodoxin (nifF) from Klebsiella oxytoca.